Reading from the N-terminus, the 466-residue chain is Glutamate decarboxylase alpha (466 aa).

The substrate site is built by T62 and N83. Pyridoxal 5'-phosphate is bound by residues 126-127, T212, and H275; that span reads SS. Position 276 is an N6-(pyridoxal phosphate)lysine (K276).

It belongs to the group II decarboxylase family. Homohexamer. Pyridoxal 5'-phosphate serves as cofactor.

It carries out the reaction L-glutamate + H(+) = 4-aminobutanoate + CO2. Converts glutamate to gamma-aminobutyrate (GABA), consuming one intracellular proton in the reaction. The gad system helps to maintain a near-neutral intracellular pH when cells are exposed to extremely acidic conditions. The ability to survive transit through the acidic conditions of the stomach is essential for successful colonization of the mammalian host by commensal and pathogenic bacteria. The polypeptide is Glutamate decarboxylase alpha (gadA) (Shigella flexneri).